An 887-amino-acid chain; its full sequence is Valine--tRNA ligase (887 aa).

The 'HIGH' region signature appears at 48–58 (PNVTGVLHVGH). Positions 527–531 (KMSKS) match the 'KMSKS' region motif. K530 contacts ATP. Residues 814 to 887 (LAGLVDIEAE…EASDRLKKLS (74 aa)) are a coiled coil.

It belongs to the class-I aminoacyl-tRNA synthetase family. ValS type 1 subfamily. Monomer.

The protein resides in the cytoplasm. The enzyme catalyses tRNA(Val) + L-valine + ATP = L-valyl-tRNA(Val) + AMP + diphosphate. Catalyzes the attachment of valine to tRNA(Val). As ValRS can inadvertently accommodate and process structurally similar amino acids such as threonine, to avoid such errors, it has a 'posttransfer' editing activity that hydrolyzes mischarged Thr-tRNA(Val) in a tRNA-dependent manner. The chain is Valine--tRNA ligase from Desulfotalea psychrophila (strain LSv54 / DSM 12343).